Reading from the N-terminus, the 345-residue chain is S-adenosylmethionine:tRNA ribosyltransferase-isomerase (345 aa).

It belongs to the QueA family. In terms of assembly, monomer.

The protein resides in the cytoplasm. The enzyme catalyses 7-aminomethyl-7-carbaguanosine(34) in tRNA + S-adenosyl-L-methionine = epoxyqueuosine(34) in tRNA + adenine + L-methionine + 2 H(+). It participates in tRNA modification; tRNA-queuosine biosynthesis. Functionally, transfers and isomerizes the ribose moiety from AdoMet to the 7-aminomethyl group of 7-deazaguanine (preQ1-tRNA) to give epoxyqueuosine (oQ-tRNA). This chain is S-adenosylmethionine:tRNA ribosyltransferase-isomerase, found in Helicobacter acinonychis (strain Sheeba).